The following is a 106-amino-acid chain: ATP-dependent Clp protease adapter protein ClpS (106 aa).

This sequence belongs to the ClpS family. In terms of assembly, binds to the N-terminal domain of the chaperone ClpA.

Functionally, involved in the modulation of the specificity of the ClpAP-mediated ATP-dependent protein degradation. The polypeptide is ATP-dependent Clp protease adapter protein ClpS (Enterobacter sp. (strain 638)).